The sequence spans 229 residues: UPF0758 protein Ppro_3582 (229 aa).

The tract at residues 1-20 (MCPGIREWPEDERPREKMLR) is disordered. A compositionally biased stretch (basic and acidic residues) spans 7–19 (EWPEDERPREKML). One can recognise an MPN domain in the interval 107–229 (RFTSPRQVFD…YLSFVERGVL (123 aa)). Residues His-178, His-180, and Asp-191 each contribute to the Zn(2+) site. The short motif at 178–191 (HNHPTGDPTPSQED) is the JAMM motif element.

Belongs to the UPF0758 family.

This is UPF0758 protein Ppro_3582 from Pelobacter propionicus (strain DSM 2379 / NBRC 103807 / OttBd1).